The following is a 139-amino-acid chain: Hydrogenase maturation factor HypA (139 aa).

His2 serves as a coordination point for Ni(2+). Cys75, Cys78, Cys111, and Cys114 together coordinate Zn(2+).

Belongs to the HypA/HybF family.

Its function is as follows. Involved in the maturation of [NiFe] hydrogenases. Required for nickel insertion into the metal center of the hydrogenase. This is Hydrogenase maturation factor HypA from Ignicoccus hospitalis (strain KIN4/I / DSM 18386 / JCM 14125).